Reading from the N-terminus, the 276-residue chain is Octanoyltransferase LipM (276 aa).

One can recognise a BPL/LPL catalytic domain in the interval 32–247 (GALPPVIRFY…GFEKGLDIKL (216 aa)). The active-site Acyl-thioester intermediate is C149.

The protein belongs to the octanoyltransferase LipM family. As to quaternary structure, monomer.

The catalysed reaction is octanoyl-[ACP] + L-lysyl-[protein] = N(6)-octanoyl-L-lysyl-[protein] + holo-[ACP] + H(+). It functions in the pathway protein modification; protein lipoylation via endogenous pathway; protein N(6)-(lipoyl)lysine from octanoyl-[acyl-carrier-protein]. In terms of biological role, catalyzes the transfer of endogenously produced octanoic acid from octanoyl-acyl-carrier-protein onto the lipoyl domain of GcvH, an intermediate carrier during protein lipoylation. This is Octanoyltransferase LipM from Macrococcus caseolyticus (strain JCSC5402) (Macrococcoides caseolyticum).